The following is a 300-amino-acid chain: Large ribosomal subunit protein bL9m (300 aa).

The protein belongs to the bacterial ribosomal protein bL9 family. In terms of assembly, component of the mitochondrial large ribosomal subunit (mt-LSU). Mature N.crassa 74S mitochondrial ribosomes consist of a small (37S) and a large (54S) subunit. The 37S small subunit contains a 16S ribosomal RNA (16S mt-rRNA) and 32 different proteins. The 54S large subunit contains a 23S rRNA (23S mt-rRNA) and 42 different proteins.

The protein resides in the mitochondrion. Its function is as follows. Component of the mitochondrial ribosome (mitoribosome), a dedicated translation machinery responsible for the synthesis of mitochondrial genome-encoded proteins, including at least some of the essential transmembrane subunits of the mitochondrial respiratory chain. The mitoribosomes are attached to the mitochondrial inner membrane and translation products are cotranslationally integrated into the membrane. This chain is Large ribosomal subunit protein bL9m (mrpl50), found in Neurospora crassa (strain ATCC 24698 / 74-OR23-1A / CBS 708.71 / DSM 1257 / FGSC 987).